A 132-amino-acid polypeptide reads, in one-letter code: Large ribosomal subunit protein uL14 (132 aa).

It belongs to the universal ribosomal protein uL14 family. In terms of assembly, part of the 50S ribosomal subunit. Forms a cluster with proteins L3 and L24e, part of which may contact the 16S rRNA in 2 intersubunit bridges.

Functionally, binds to 23S rRNA. Forms part of two intersubunit bridges in the 70S ribosome. The sequence is that of Large ribosomal subunit protein uL14 from Methanoregula boonei (strain DSM 21154 / JCM 14090 / 6A8).